Reading from the N-terminus, the 741-residue chain is Wall-associated receptor kinase 3 (741 aa).

Residues 1–23 (MKFQEGVFLVVIFFLAYTQLVKG) form the signal peptide. The Extracellular segment spans residues 24–342 (QHQPREDCKL…CTRPEYKRTR (319 aa)). 12 N-linked (GlcNAc...) asparagine glycosylation sites follow: Asn37, Asn59, Asn78, Asn100, Asn103, Asn141, Asn192, Asn199, Asn232, Asn246, Asn261, and Asn266. In terms of domain architecture, EGF-like 1 spans 245–292 (GNQTCEQAGSTRICGKNSSCYNSTTRNGYICKCNEGYDGNPYRSEGCK). Cystine bridges form between Cys249/Cys264, Cys258/Cys275, Cys277/Cys291, Cys297/Cys310, Cys304/Cys319, and Cys321/Cys333. An EGF-like 2; calcium-binding domain is found at 293 to 334 (DIDECISDTHNCSDPKTCRNRDGGFDCKCPSGYDLNSSMSCT). Asn303 is a glycosylation site (N-linked (GlcNAc...) asparagine). Asn328 carries N-linked (GlcNAc...) asparagine glycosylation. A helical membrane pass occupies residues 343–363 (IFLVIIIGVLVLLLAAICIQH). At 364–741 (ATKQRKYTKL…VAILDIETGR (378 aa)) the chain is on the cytoplasmic side. The residue at position 404 (Thr404) is a Phosphothreonine. Residues 415 to 698 (YDESRILGQG…RVEKTKHKWS (284 aa)) form the Protein kinase domain. ATP is bound by residues 421–429 (LGQGGQGTV) and Lys443. Tyr488 carries the phosphotyrosine modification. Asp540 functions as the Proton acceptor in the catalytic mechanism. Phosphothreonine occurs at positions 574 and 579. Position 587 is a phosphotyrosine (Tyr587).

The protein belongs to the protein kinase superfamily. Ser/Thr protein kinase family. In terms of tissue distribution, predominantly expressed in green tissues such as stems and leaves.

The protein resides in the membrane. The catalysed reaction is L-seryl-[protein] + ATP = O-phospho-L-seryl-[protein] + ADP + H(+). It carries out the reaction L-threonyl-[protein] + ATP = O-phospho-L-threonyl-[protein] + ADP + H(+). Serine/threonine-protein kinase that may function as a signaling receptor of extracellular matrix component. Binding to pectin may have significance in the control of cell expansion, morphogenesis and development. The sequence is that of Wall-associated receptor kinase 3 (WAK3) from Arabidopsis thaliana (Mouse-ear cress).